The chain runs to 398 residues: Glutamyl-tRNA reductase (398 aa).

Substrate contacts are provided by residues 45–48, S88, 93–95, and Q99; these read TCNR and EDQ. C46 serves as the catalytic Nucleophile. 168–173 is a binding site for NADP(+); it reads GAGKMG.

The protein belongs to the glutamyl-tRNA reductase family. As to quaternary structure, homodimer.

The enzyme catalyses (S)-4-amino-5-oxopentanoate + tRNA(Glu) + NADP(+) = L-glutamyl-tRNA(Glu) + NADPH + H(+). It functions in the pathway porphyrin-containing compound metabolism; protoporphyrin-IX biosynthesis; 5-aminolevulinate from L-glutamyl-tRNA(Glu): step 1/2. Its function is as follows. Catalyzes the NADPH-dependent reduction of glutamyl-tRNA(Glu) to glutamate 1-semialdehyde (GSA). The chain is Glutamyl-tRNA reductase (hemA) from Methanothermobacter marburgensis (strain ATCC BAA-927 / DSM 2133 / JCM 14651 / NBRC 100331 / OCM 82 / Marburg) (Methanobacterium thermoautotrophicum).